Consider the following 298-residue polypeptide: tRNA-uridine aminocarboxypropyltransferase 2 (298 aa).

Residue Met-1 is modified to N-acetylmethionine. The segment covering 1 to 10 (MEPQAEERTL) has biased composition (basic and acidic residues). The disordered stretch occupies residues 1 to 55 (MEPQAEERTLGEPAPPPSGALASPTPDEEERTEGGAPPTATPAGASGDSTSADGL). A compositionally biased stretch (low complexity) spans 34-45 (GGAPPTATPAGA). A Phosphoserine modification is found at Ser-132. A DXTW motif is present at residues 178 to 181 (DGTW).

Belongs to the TDD superfamily. DTWD2 family.

Its subcellular location is the nucleus. The protein resides in the cytoplasm. The enzyme catalyses a uridine in tRNA + S-adenosyl-L-methionine = a 3-[(3S)-3-amino-3-carboxypropyl]uridine in tRNA + S-methyl-5'-thioadenosine + H(+). In terms of biological role, catalyzes the formation of 3-(3-amino-3-carboxypropyl)uridine (acp3U) at position 20a in the D-loop of several cytoplasmic tRNAs (acp3U(20a)). Also has a weak activity to form acp3U at position 20 in the D-loop of tRNAs (acp3U(20)). Involved in glycoRNA biosynthesis by mediating formation of acp3U, which acts as an attachment site for N-glycans on tRNAs. GlycoRNAs consist of RNAs modified with secretory N-glycans that are presented on the cell surface. This chain is tRNA-uridine aminocarboxypropyltransferase 2, found in Mus musculus (Mouse).